We begin with the raw amino-acid sequence, 180 residues long: Putative 3-methyladenine DNA glycosylase (180 aa).

The protein belongs to the DNA glycosylase MPG family.

In Wolbachia pipientis wMel, this protein is Putative 3-methyladenine DNA glycosylase.